Reading from the N-terminus, the 804-residue chain is Lon protease 2 (804 aa).

The Lon N-terminal domain maps to 19–216 (VPILPLRNSV…LVLAMVGRQL (198 aa)). 367–374 (GPPGVGKT) serves as a coordination point for ATP. In terms of domain architecture, Lon proteolytic spans 603–784 (TLQPGVATGL…EEILPLVLEP (182 aa)). Residues Ser-690 and Lys-733 contribute to the active site. Residues 782–804 (LEPPRRAPAQSASPEELEEQAGV) are disordered.

It belongs to the peptidase S16 family. As to quaternary structure, homohexamer. Organized in a ring with a central cavity.

The protein localises to the cytoplasm. It catalyses the reaction Hydrolysis of proteins in presence of ATP.. ATP-dependent serine protease that mediates the selective degradation of mutant and abnormal proteins as well as certain short-lived regulatory proteins. Required for cellular homeostasis and for survival from DNA damage and developmental changes induced by stress. Degrades polypeptides processively to yield small peptide fragments that are 5 to 10 amino acids long. Binds to DNA in a double-stranded, site-specific manner. The polypeptide is Lon protease 2 (Sorangium cellulosum (strain So ce56) (Polyangium cellulosum (strain So ce56))).